A 151-amino-acid chain; its full sequence is Globin CTT-VIII (151 aa).

Residues 4–148 (PMSADQLALF…MFFYILHALE (145 aa)) enclose the Globin domain. Heme b is bound by residues His-62 and His-97.

The protein belongs to the globin family. As to quaternary structure, homodimer.

This Chironomus thummi thummi (Midge) protein is Globin CTT-VIII (CTT-8).